The following is a 96-amino-acid chain: Evasin P1074 (96 aa).

The signal sequence occupies residues 1–28 (MAFNMITFLQMAVFVVILFNINLHSASA). 3 disulfide bridges follow: Cys-48-Cys-67, Cys-52-Cys-69, and Cys-63-Cys-80. N-linked (GlcNAc...) asparagine glycosylation is present at Asn-74.

The protein localises to the secreted. Salivary chemokine-binding protein which binds to host chemokines CXCL1 and CXCL8. This is Evasin P1074 from Ixodes ricinus (Common tick).